The chain runs to 117 residues: MSKKNSQTSPQRQKMHVKKGDVVQVIAGSDKGKVGEILRALPQESTVVVKGVNIRTKHTKPQQEGESGQIVTYEAPIHSSKVMLYSEKKKIASRVGYTLTEDGRKVRILKKTGEIID.

The segment covering 1 to 12 (MSKKNSQTSPQR) has biased composition (polar residues). Residues 1-20 (MSKKNSQTSPQRQKMHVKKG) form a disordered region.

This sequence belongs to the universal ribosomal protein uL24 family. In terms of assembly, part of the 50S ribosomal subunit.

Functionally, one of two assembly initiator proteins, it binds directly to the 5'-end of the 23S rRNA, where it nucleates assembly of the 50S subunit. Its function is as follows. One of the proteins that surrounds the polypeptide exit tunnel on the outside of the subunit. The polypeptide is Large ribosomal subunit protein uL24 (Microcystis aeruginosa (strain NIES-843 / IAM M-2473)).